We begin with the raw amino-acid sequence, 106 residues long: Translation initiation factor 1A 2 (106 aa).

Residues 1 to 24 (MRKRREGTANNSPTPEVTRVRTPR) form a disordered region. Residues 18-92 (TRVRTPRKEN…SKADVIWKYT (75 aa)) enclose the S1-like domain.

Belongs to the eIF-1A family.

Its function is as follows. Seems to be required for maximal rate of protein biosynthesis. Enhances ribosome dissociation into subunits and stabilizes the binding of the initiator Met-tRNA(I) to 40 S ribosomal subunits. This Methanosarcina mazei (strain ATCC BAA-159 / DSM 3647 / Goe1 / Go1 / JCM 11833 / OCM 88) (Methanosarcina frisia) protein is Translation initiation factor 1A 2 (eIF1A2).